Here is a 523-residue protein sequence, read N- to C-terminus: Tryptamine 5-hydroxylase (523 aa).

The helical transmembrane segment at 5-25 threads the bilayer; the sequence is MASTMSLALLVLSAAYVLVAL. Cys453 is a binding site for heme.

It belongs to the cytochrome P450 family. It depends on heme as a cofactor.

It is found in the endoplasmic reticulum membrane. The catalysed reaction is tryptamine + reduced [NADPH--hemoprotein reductase] + O2 = serotonin + oxidized [NADPH--hemoprotein reductase] + H2O + H(+). Involved in serotonin biosynthesis. Catalyzes the conversion of tryptamine to serotonin. Accumulation of serotonin may play a role in innate immunity. The polypeptide is Tryptamine 5-hydroxylase (Oryza sativa subsp. japonica (Rice)).